We begin with the raw amino-acid sequence, 511 residues long: Serine hydroxymethyltransferase (511 aa).

Position 287 is an N6-(pyridoxal phosphate)lysine (Lys287).

It belongs to the SHMT family. In terms of assembly, homotetramer. Pyridoxal 5'-phosphate is required as a cofactor.

The catalysed reaction is (6R)-5,10-methylene-5,6,7,8-tetrahydrofolate + glycine + H2O = (6S)-5,6,7,8-tetrahydrofolate + L-serine. The protein operates within one-carbon metabolism; tetrahydrofolate interconversion. In terms of biological role, interconversion of serine and glycine. This is Serine hydroxymethyltransferase from Caenorhabditis briggsae.